Here is a 488-residue protein sequence, read N- to C-terminus: Glutamyl-tRNA(Gln) amidotransferase subunit A (488 aa).

Residues lysine 77 and serine 152 each act as charge relay system in the active site. The active-site Acyl-ester intermediate is serine 176.

Belongs to the amidase family. GatA subfamily. As to quaternary structure, heterotrimer of A, B and C subunits.

The catalysed reaction is L-glutamyl-tRNA(Gln) + L-glutamine + ATP + H2O = L-glutaminyl-tRNA(Gln) + L-glutamate + ADP + phosphate + H(+). Functionally, allows the formation of correctly charged Gln-tRNA(Gln) through the transamidation of misacylated Glu-tRNA(Gln) in organisms which lack glutaminyl-tRNA synthetase. The reaction takes place in the presence of glutamine and ATP through an activated gamma-phospho-Glu-tRNA(Gln). The polypeptide is Glutamyl-tRNA(Gln) amidotransferase subunit A (Streptococcus pneumoniae (strain 70585)).